Consider the following 128-residue polypeptide: Flagellar basal body rod protein FlgB (128 aa).

This sequence belongs to the flagella basal body rod proteins family. In terms of assembly, the basal body constitutes a major portion of the flagellar organelle and consists of a number of rings mounted on a central rod. In Gram-negative bacteria, at least four rings, L, P, S and M are present, whereas Gram-positive bacteria lack the L and P rings. The rod consists of about 26 subunits of FlgG in the distal portion, and FlgB, FlgC and FlgF build up the proximal portion of the rod with about 6 subunits each. Rod assembly occurs by export via the flagellum-specific pathway of its constituent proteins and by their incorporation into the rod structure in the probable order of FlgB, FlgC, FlgF and FlgG. Another protein, FliE, also assembles onto the stable rod structure.

Its subcellular location is the bacterial flagellum basal body. In terms of biological role, structural component of flagellum, the bacterial motility apparatus. Part of the rod structure of flagellar basal body. The chain is Flagellar basal body rod protein FlgB from Cereibacter sphaeroides (strain ATCC 17023 / DSM 158 / JCM 6121 / CCUG 31486 / LMG 2827 / NBRC 12203 / NCIMB 8253 / ATH 2.4.1.) (Rhodobacter sphaeroides).